Here is a 333-residue protein sequence, read N- to C-terminus: Tetraacyldisaccharide 4'-kinase (333 aa).

60 to 67 serves as a coordination point for ATP; the sequence is TVGGTGKT.

Belongs to the LpxK family.

The enzyme catalyses a lipid A disaccharide + ATP = a lipid IVA + ADP + H(+). Its pathway is glycolipid biosynthesis; lipid IV(A) biosynthesis; lipid IV(A) from (3R)-3-hydroxytetradecanoyl-[acyl-carrier-protein] and UDP-N-acetyl-alpha-D-glucosamine: step 6/6. Functionally, transfers the gamma-phosphate of ATP to the 4'-position of a tetraacyldisaccharide 1-phosphate intermediate (termed DS-1-P) to form tetraacyldisaccharide 1,4'-bis-phosphate (lipid IVA). The polypeptide is Tetraacyldisaccharide 4'-kinase (Ectopseudomonas mendocina (strain ymp) (Pseudomonas mendocina)).